The chain runs to 147 residues: Plasminogen receptor (KT) (147 aa).

Residues 1–52 (MGFIFSKSMNENMKNQQEFMVTHARLQLERHLTMQNEMRERQMAMQIAWSRE) lie on the Extracellular side of the membrane. The helical transmembrane segment at 53-73 (FLKYFGTFFGIATISLATGAL) threads the bilayer. Residues 74 to 78 (KRKKP) lie on the Cytoplasmic side of the membrane. A helical transmembrane segment spans residues 79–99 (AFLVPIVPLSFIFTYQYDLGY). Over 100 to 147 (GTLLQRMKSEAEDILETEKTKLELPKGLITFESLEKARREQSKLFSDK) the chain is Extracellular.

In terms of assembly, interacts with PLAT. Interacts with PLAUR. In terms of tissue distribution, expressed in monocytes; detected in differentiated monocytes but not in progenitor cells. Expressed in adrenal medulla and hippocampus.

It localises to the cell membrane. In terms of biological role, receptor for plasminogen. Regulates urokinase plasminogen activator-dependent and stimulates tissue-type plasminogen activator-dependent cell surface plasminogen activation. Proposed to be part of a local catecholaminergic cell plasminogen activation system that regulates neuroendocrine prohormone processing. Involved in regulation of inflammatory response; regulates monocyte chemotactic migration and matrix metalloproteinase activation, such as of MMP2 and MMP9. This Mus musculus (Mouse) protein is Plasminogen receptor (KT) (Plgrkt).